The sequence spans 455 residues: 12S seed storage protein CRB (455 aa).

The N-terminal stretch at 1–24 (MGRVSSIISFSLTLLILFNGYTAQ) is a signal peptide. Disulfide bonds link cysteine 30-cysteine 63 and cysteine 106-cysteine 276. Cupin type-1 domains are found at residues 35–229 (LNAL…ETAQ) and 282–431 (ENLD…EEAK). Threonine 109 carries the phosphothreonine modification. The residue at position 299 (tyrosine 299) is a Phosphotyrosine. 2 positions are modified to phosphoserine: serine 301 and serine 367. Phosphothreonine is present on residues threonine 395 and threonine 420. At serine 436 the chain carries Phosphoserine.

This sequence belongs to the 11S seed storage protein (globulins) family. As to quaternary structure, hexamer; each subunit is composed of an acidic and a basic chain derived from a single precursor and linked by a disulfide bond. Ubiquitinated. In terms of processing, proteolytically processed during seed maturation at a conserved Asn-Gly peptide bond by an asparaginyl endopeptidase to produce two mature polypeptides referred to as alpha and beta subunits that are joined together by a disulfide bond. Post-translationally, phosphorylated in seeds on some Tyr residues in response to abscisic acid (ABA). In terms of tissue distribution, accumulates in seeds 8 days after anthesis.

It is found in the protein storage vacuole. Seed storage protein. The chain is 12S seed storage protein CRB (CRB) from Arabidopsis thaliana (Mouse-ear cress).